The following is a 67-amino-acid chain: V-type proton ATPase subunit e (67 aa).

Topologically, residues 1-2 (MG) are lumenal. Residues 3-23 (GLVVLLVGLLTALMSVVSYYV) form a helical membrane-spanning segment. The Cytoplasmic segment spans residues 24 to 35 (SPKGNNTSTWQM). Residues 36–56 (SLILTFSCCYLLWAITYLAQL) form a helical membrane-spanning segment. Topologically, residues 57-67 (HPLEAPSRVLE) are lumenal.

Belongs to the V-ATPase e1/e2 subunit family. As to quaternary structure, V-ATPase is a heteromultimeric enzyme composed of a peripheral catalytic V1 complex (components A to H) attached to an integral membrane V0 proton pore complex (components: a, c, c', c'', d, e, f and VOA1).

The protein resides in the vacuole membrane. Functionally, subunit of the V0 complex of vacuolar(H+)-ATPase (V-ATPase), a multisubunit enzyme composed of a peripheral complex (V1) that hydrolyzes ATP and a membrane integral complex (V0) that translocates protons. V-ATPase is responsible for acidifying and maintaining the pH of intracellular compartments. The chain is V-type proton ATPase subunit e (vma9) from Schizosaccharomyces pombe (strain 972 / ATCC 24843) (Fission yeast).